Consider the following 152-residue polypeptide: Nuclear cap-binding protein subunit 2 (152 aa).

MRNA is bound by residues Tyr8, Tyr31, 100–104 (RTDWD), 111–115 (RQFGR), and 121–122 (QV). The RRM domain maps to 28-106 (TTLYVGNMSF…RIIRTDWDAG (79 aa)).

This sequence belongs to the RRM NCBP2 family. Component of the nuclear cap-binding complex (CBC), a heterodimer composed of Cbp80 and Cbp20 that interacts with m7GpppG-capped RNA.

It is found in the nucleus. Component of the cap-binding complex (CBC), which binds co-transcriptionally to the 5' cap of pre-mRNAs and is involved in various processes such as pre-mRNA splicing and RNA-mediated gene silencing (RNAi). The CBC complex is involved in miRNA-mediated RNA interference and is required for primary microRNAs (miRNAs) processing. Also involved in innate immunity via the short interfering RNAs (siRNAs) processing machinery by restricting the viral RNA production. In the CBC complex, Cbp20 recognizes and binds capped RNAs (m7GpppG-capped RNA) but requires Cbp80 to stabilize the movement of its N-terminal loop and lock the CBC into a high affinity cap-binding state with the cap structure. The protein is Nuclear cap-binding protein subunit 2 (Cbp20) of Ixodes scapularis (Black-legged tick).